Consider the following 117-residue polypeptide: Large ribosomal subunit protein bL20 (117 aa).

This sequence belongs to the bacterial ribosomal protein bL20 family.

Its function is as follows. Binds directly to 23S ribosomal RNA and is necessary for the in vitro assembly process of the 50S ribosomal subunit. It is not involved in the protein synthesizing functions of that subunit. The chain is Large ribosomal subunit protein bL20 from Rickettsia rickettsii (strain Iowa).